The primary structure comprises 290 residues: UPF0761 membrane protein YihY (290 aa).

6 helical membrane passes run 44 to 64 (LLSLVPLVAVVFALFAAFPMF), 104 to 124 (VGACGLIVTALLLMYSIDSAL), 140 to 160 (FAVYWMILTLGPLLAGASLAI), 183 to 203 (IFPLLLSWISFWLLYSIVPTI), 210 to 230 (AIVGAFVAALLFEAGKKGFAL), and 244 to 264 (VLAVIPILFVWVYWTWCIVLL).

The protein belongs to the UPF0761 family.

The protein localises to the cell inner membrane. This Shigella boydii serotype 4 (strain Sb227) protein is UPF0761 membrane protein YihY.